The chain runs to 449 residues: UDP-N-acetylmuramoylalanine--D-glutamate ligase (449 aa).

An ATP-binding site is contributed by 118–124 (GSNGKTT).

It belongs to the MurCDEF family.

The protein resides in the cytoplasm. It catalyses the reaction UDP-N-acetyl-alpha-D-muramoyl-L-alanine + D-glutamate + ATP = UDP-N-acetyl-alpha-D-muramoyl-L-alanyl-D-glutamate + ADP + phosphate + H(+). Its pathway is cell wall biogenesis; peptidoglycan biosynthesis. Functionally, cell wall formation. Catalyzes the addition of glutamate to the nucleotide precursor UDP-N-acetylmuramoyl-L-alanine (UMA). In Oceanobacillus iheyensis (strain DSM 14371 / CIP 107618 / JCM 11309 / KCTC 3954 / HTE831), this protein is UDP-N-acetylmuramoylalanine--D-glutamate ligase.